Reading from the N-terminus, the 1567-residue chain is Myosin-2A (1567 aa).

A Myosin N-terminal SH3-like domain is found at 4-57 (EVGTRCWYPSKEQGWIGAEVTKNDLKDGTYFMELTLEDNEVVNVETKDLTNEKD). A Myosin motor domain is found at 70-786 (ESTEDLTTLS…MLAYFEKLRS (717 aa)). 164-171 (GESGAGKT) is a binding site for ATP. The actin-binding stretch occupies residues 446 to 526 (FIGVLDIYGF…LGILSLLDEE (81 aa)). The interval 619–640 (EEAKKNAASQDQKQLKKPTPIR) is disordered. IQ domains are found at residues 789–818 (MNSA…SLSL), 812–836 (MKAS…EYEL), 837–859 (EQHA…YISG), 860–884 (VISS…QSKY), 885–907 (ESNA…AYES), and 908–937 (KRRD…DAKS). A coiled-coil region spans residues 947-1091 (KLENKVIQLT…LAHLQTSIAL (145 aa)). A non alpha-helical, tail domain region spans residues 1092–1567 (GTVTTNTNIV…VAQQVTVPDA (476 aa)). In terms of domain architecture, Dilute spans 1230-1505 (AQVLTTIQKV…LKYVADIVKK (276 aa)).

It belongs to the TRAFAC class myosin-kinesin ATPase superfamily. Myosin family. Homodimer. Interacts with calmodulin (CMD1) and the myosin light chain MLC1 through its IQ repeats.

Its function is as follows. Myosin heavy chain that is required for the cell cycle-regulated transport of various organelles and proteins for their segregation. Functions by binding with its tail domain to receptor proteins on organelles and exerting force with its N-terminal motor domain against actin filaments, thereby transporting its cargo along polarized actin cables. The sequence is that of Myosin-2A (MYO2A) from Naumovozyma castellii (Yeast).